The following is a 194-amino-acid chain: Threonylcarbamoyl-AMP synthase (194 aa).

The region spanning 11–194 (FRNLMKIINA…GINYKIIRKG (184 aa)) is the YrdC-like domain.

The protein belongs to the SUA5 family. TsaC subfamily.

It localises to the cytoplasm. The catalysed reaction is L-threonine + hydrogencarbonate + ATP = L-threonylcarbamoyladenylate + diphosphate + H2O. Functionally, required for the formation of a threonylcarbamoyl group on adenosine at position 37 (t(6)A37) in tRNAs that read codons beginning with adenine. Catalyzes the conversion of L-threonine, HCO(3)(-)/CO(2) and ATP to give threonylcarbamoyl-AMP (TC-AMP) as the acyladenylate intermediate, with the release of diphosphate. The polypeptide is Threonylcarbamoyl-AMP synthase (Wigglesworthia glossinidia brevipalpis).